Here is a 138-residue protein sequence, read N- to C-terminus: ATP synthase epsilon chain (138 aa).

This sequence belongs to the ATPase epsilon chain family. In terms of assembly, F-type ATPases have 2 components, CF(1) - the catalytic core - and CF(0) - the membrane proton channel. CF(1) has five subunits: alpha(3), beta(3), gamma(1), delta(1), epsilon(1). CF(0) has three main subunits: a, b and c.

It is found in the cell inner membrane. Produces ATP from ADP in the presence of a proton gradient across the membrane. In Geobacter metallireducens (strain ATCC 53774 / DSM 7210 / GS-15), this protein is ATP synthase epsilon chain.